The chain runs to 211 residues: Shikimate kinase (211 aa).

Positions 1–23 are disordered; it reads MNASANLCAASDNDPQPGDQEAA. 50-55 contacts ATP; sequence GAGKTT. Threonine 54 contacts Mg(2+). Aspartate 72, arginine 96, and glycine 118 together coordinate substrate. An ATP-binding site is contributed by arginine 156. Position 175 (arginine 175) interacts with substrate.

It belongs to the shikimate kinase family. Monomer. It depends on Mg(2+) as a cofactor.

Its subcellular location is the cytoplasm. It catalyses the reaction shikimate + ATP = 3-phosphoshikimate + ADP + H(+). Its pathway is metabolic intermediate biosynthesis; chorismate biosynthesis; chorismate from D-erythrose 4-phosphate and phosphoenolpyruvate: step 5/7. Catalyzes the specific phosphorylation of the 3-hydroxyl group of shikimic acid using ATP as a cosubstrate. The sequence is that of Shikimate kinase from Bordetella bronchiseptica (strain ATCC BAA-588 / NCTC 13252 / RB50) (Alcaligenes bronchisepticus).